The primary structure comprises 235 residues: Lipoprotein-releasing system ATP-binding protein LolD 1 (235 aa).

The 230-residue stretch at 5–234 (FEARGITKSY…DGRLQLCTPL (230 aa)) folds into the ABC transporter domain. ATP is bound at residue 42-49 (GASGSGKT).

The protein belongs to the ABC transporter superfamily. Lipoprotein translocase (TC 3.A.1.125) family. In terms of assembly, the complex is composed of two ATP-binding proteins (LolD) and two transmembrane proteins (LolC and LolE).

The protein localises to the cell inner membrane. Functionally, part of the ABC transporter complex LolCDE involved in the translocation of mature outer membrane-directed lipoproteins, from the inner membrane to the periplasmic chaperone, LolA. Responsible for the formation of the LolA-lipoprotein complex in an ATP-dependent manner. In Chlorobium luteolum (strain DSM 273 / BCRC 81028 / 2530) (Pelodictyon luteolum), this protein is Lipoprotein-releasing system ATP-binding protein LolD 1.